A 414-amino-acid chain; its full sequence is Esterase FrsA (414 aa).

It belongs to the FrsA family.

It carries out the reaction a carboxylic ester + H2O = an alcohol + a carboxylate + H(+). Functionally, catalyzes the hydrolysis of esters. The polypeptide is Esterase FrsA (Salmonella choleraesuis (strain SC-B67)).